The chain runs to 275 residues: 2,3,4,5-tetrahydropyridine-2,6-dicarboxylate N-succinyltransferase (275 aa).

Belongs to the transferase hexapeptide repeat family.

The protein localises to the cytoplasm. It catalyses the reaction (S)-2,3,4,5-tetrahydrodipicolinate + succinyl-CoA + H2O = (S)-2-succinylamino-6-oxoheptanedioate + CoA. It functions in the pathway amino-acid biosynthesis; L-lysine biosynthesis via DAP pathway; LL-2,6-diaminopimelate from (S)-tetrahydrodipicolinate (succinylase route): step 1/3. The protein is 2,3,4,5-tetrahydropyridine-2,6-dicarboxylate N-succinyltransferase of Paraburkholderia phymatum (strain DSM 17167 / CIP 108236 / LMG 21445 / STM815) (Burkholderia phymatum).